The sequence spans 422 residues: Tryptophan synthase beta chain 1 (422 aa).

Lys-107 carries the post-translational modification N6-(pyridoxal phosphate)lysine.

The protein belongs to the TrpB family. Tetramer of two alpha and two beta chains. The cofactor is pyridoxal 5'-phosphate.

The catalysed reaction is (1S,2R)-1-C-(indol-3-yl)glycerol 3-phosphate + L-serine = D-glyceraldehyde 3-phosphate + L-tryptophan + H2O. It functions in the pathway amino-acid biosynthesis; L-tryptophan biosynthesis; L-tryptophan from chorismate: step 5/5. Its function is as follows. The beta subunit is responsible for the synthesis of L-tryptophan from indole and L-serine. This chain is Tryptophan synthase beta chain 1 (trpB1), found in Sulfurisphaera tokodaii (strain DSM 16993 / JCM 10545 / NBRC 100140 / 7) (Sulfolobus tokodaii).